Consider the following 226-residue polypeptide: IVGGVEAVPNSWPHQAALFIDDMYFCGGSLISPEWILTAAHCMDGAGFVDVVLGAHNIREDEATQVTIQSTDFTVHENYNSFVISNDIAVIRLPVPVTLTAAIATVGLPSTDVGVGTVVTPTGWGLPSDSALGISDVLRQVDVPIMSNADCDAVYGIVTDGNICIDSTGGKGTCNGDSGGPLNYNGLTYGITSFGAAAGCEAGYPDAFTRVTYFLDWIQTQTGITP.

The Peptidase S1 domain maps to 1–223 (IVGGVEAVPN…FLDWIQTQTG (223 aa)). The cysteines at positions 26 and 42 are disulfide-linked. Residues His41 and Asp87 each act as charge relay system in the active site. 2 disulfide bridges follow: Cys151–Cys164 and Cys174–Cys200. The active-site Charge relay system is Ser178.

This sequence belongs to the peptidase S1 family.

It carries out the reaction Hydrolysis of proteins, with broad specificity for peptide bonds. Native collagen is cleaved about 75% of the length of the molecule from the N-terminus. Low activity on small molecule substrates of both trypsin and chymotrypsin.. In terms of biological role, this enzyme is a serine protease capable of degrading the native triple helix of collagen. This Leptuca pugilator (Atlantic sand fiddler crab) protein is Brachyurin.